The sequence spans 451 residues: uncharacterized protein (451 aa).

It to ORF5 in pFZ1.

This is an uncharacterized protein from Methanothermobacter thermautotrophicus (Methanobacterium thermoformicicum).